The following is a 299-amino-acid chain: Protein sprouty homolog 4 (299 aa).

Position 1 is an N-acetylmethionine (Met1). Disordered stretches follow at residues 55–79 (NPSL…PTPA) and 92–126 (FSGR…QASP). Low complexity predominate over residues 92-107 (FSGRPSSVSSSSSTSS). A Phosphoserine modification is found at Ser125. One can recognise an SPR domain in the interval 166–273 (KCKECASPRT…GYDRLRRPGC (108 aa)). Positions 181–299 (VCNQECLCSA…AKTSRPDKPF (119 aa)) are required for interaction with TESK1. Required for colocalization with TESK1 at vesicular spots in the cytoplasm and inhibition of TESK1 kinase activity, resulting in inhibition of cell spreading.

The protein belongs to the sprouty family. Interacts (via C-terminus) with TESK1 (via both C- and N-termini); the interaction inhibits TESK1 kinase activity. Interacts with RAF1. Interacts with CAV1 (via C-terminus).

It localises to the cytoplasm. The protein resides in the cell projection. Its subcellular location is the ruffle membrane. Functionally, suppresses the insulin receptor and EGFR-transduced MAPK signaling pathway, but does not inhibit MAPK activation by a constitutively active mutant Ras. Probably impairs the formation of GTP-Ras. Inhibits Ras-independent, but not Ras-dependent, activation of RAF1. Represses integrin-mediated cell spreading via inhibition of TESK1-mediated phosphorylation of cofilin. This Homo sapiens (Human) protein is Protein sprouty homolog 4 (SPRY4).